We begin with the raw amino-acid sequence, 635 residues long: 3-dehydroshikimate dehydratase (635 aa).

E134, D165, Q191, and E239 together coordinate a divalent metal cation. VOC domains are found at residues G295–Q414 and R440–E590. 3 residues coordinate Mg(2+): H443, H521, and E599.

This sequence belongs to the bacterial two-domain DSD family. As to quaternary structure, homodimer. Co(2+) serves as cofactor. Ni(2+) is required as a cofactor. It depends on Mg(2+) as a cofactor. Requires Mn(2+) as cofactor.

It carries out the reaction 3-dehydroshikimate = 3,4-dihydroxybenzoate + H2O. It functions in the pathway aromatic compound metabolism; 3,4-dihydroxybenzoate biosynthesis. Catalyzes the conversion of 3-dehydroshikimate to protocatechuate (3,4-dihydroxybenzoate), a common intermediate of quinate and shikimate degradation pathways. This Pseudomonas putida (strain ATCC 47054 / DSM 6125 / CFBP 8728 / NCIMB 11950 / KT2440) protein is 3-dehydroshikimate dehydratase.